The chain runs to 656 residues: Translation factor GUF1 homolog, mitochondrial (656 aa).

A mitochondrion-targeting transit peptide spans 1–29 (MLAVRRRGLRVLAVAPLRVRGLATTSTEF). A tr-type G domain is found at 54–238 (ERIRNFSIVA…AVVERLPPPV (185 aa)). Residues 63-70 (AHIDHGKS), 131-135 (DTPGH), and 185-188 (TKID) each bind GTP.

Belongs to the TRAFAC class translation factor GTPase superfamily. Classic translation factor GTPase family. LepA subfamily.

It localises to the mitochondrion inner membrane. It carries out the reaction GTP + H2O = GDP + phosphate + H(+). In terms of biological role, promotes mitochondrial protein synthesis. May act as a fidelity factor of the translation reaction, by catalyzing a one-codon backward translocation of tRNAs on improperly translocated ribosomes. Binds to mitochondrial ribosomes in a GTP-dependent manner. This chain is Translation factor GUF1 homolog, mitochondrial, found in Phytophthora infestans (strain T30-4) (Potato late blight agent).